Consider the following 318-residue polypeptide: Aspartate carbamoyltransferase catalytic subunit (318 aa).

Arg59 and Thr60 together coordinate carbamoyl phosphate. An L-aspartate-binding site is contributed by Lys87. The carbamoyl phosphate site is built by Arg109, His137, and Gln140. 2 residues coordinate L-aspartate: Arg170 and Arg224. Residues Gly265 and Pro266 each contribute to the carbamoyl phosphate site.

The protein belongs to the aspartate/ornithine carbamoyltransferase superfamily. ATCase family. In terms of assembly, heterododecamer (2C3:3R2) of six catalytic PyrB chains organized as two trimers (C3), and six regulatory PyrI chains organized as three dimers (R2).

It catalyses the reaction carbamoyl phosphate + L-aspartate = N-carbamoyl-L-aspartate + phosphate + H(+). It functions in the pathway pyrimidine metabolism; UMP biosynthesis via de novo pathway; (S)-dihydroorotate from bicarbonate: step 2/3. Functionally, catalyzes the condensation of carbamoyl phosphate and aspartate to form carbamoyl aspartate and inorganic phosphate, the committed step in the de novo pyrimidine nucleotide biosynthesis pathway. In Rhizobium etli (strain ATCC 51251 / DSM 11541 / JCM 21823 / NBRC 15573 / CFN 42), this protein is Aspartate carbamoyltransferase catalytic subunit.